A 100-amino-acid polypeptide reads, in one-letter code: Large ribosomal subunit protein bL21 (100 aa).

It belongs to the bacterial ribosomal protein bL21 family. Part of the 50S ribosomal subunit. Contacts protein L20.

This protein binds to 23S rRNA in the presence of protein L20. The chain is Large ribosomal subunit protein bL21 from Wolbachia sp. subsp. Brugia malayi (strain TRS).